Reading from the N-terminus, the 374-residue chain is Phosphoserine aminotransferase (374 aa).

Arg-46 provides a ligand contact to L-glutamate. Residues 80-81, Phe-104, Thr-150, Asp-174, and Gln-197 contribute to the pyridoxal 5'-phosphate site; that span reads AT. Residue Lys-198 is modified to N6-(pyridoxal phosphate)lysine. A pyridoxal 5'-phosphate-binding site is contributed by 249–250; the sequence is NT.

The protein belongs to the class-V pyridoxal-phosphate-dependent aminotransferase family. SerC subfamily. In terms of assembly, homodimer. It depends on pyridoxal 5'-phosphate as a cofactor.

The protein resides in the cytoplasm. It carries out the reaction O-phospho-L-serine + 2-oxoglutarate = 3-phosphooxypyruvate + L-glutamate. It catalyses the reaction 4-(phosphooxy)-L-threonine + 2-oxoglutarate = (R)-3-hydroxy-2-oxo-4-phosphooxybutanoate + L-glutamate. It participates in amino-acid biosynthesis; L-serine biosynthesis; L-serine from 3-phospho-D-glycerate: step 2/3. It functions in the pathway cofactor biosynthesis; pyridoxine 5'-phosphate biosynthesis; pyridoxine 5'-phosphate from D-erythrose 4-phosphate: step 3/5. Functionally, catalyzes the reversible conversion of 3-phosphohydroxypyruvate to phosphoserine and of 3-hydroxy-2-oxo-4-phosphonooxybutanoate to phosphohydroxythreonine. The polypeptide is Phosphoserine aminotransferase (Nocardioides sp. (strain ATCC BAA-499 / JS614)).